A 1208-amino-acid chain; its full sequence is DNA-directed RNA polymerase subunit beta (1208 aa).

This sequence belongs to the RNA polymerase beta chain family. The RNAP catalytic core consists of 2 alpha, 1 beta, 1 beta' and 1 omega subunit. When a sigma factor is associated with the core the holoenzyme is formed, which can initiate transcription.

The enzyme catalyses RNA(n) + a ribonucleoside 5'-triphosphate = RNA(n+1) + diphosphate. In terms of biological role, DNA-dependent RNA polymerase catalyzes the transcription of DNA into RNA using the four ribonucleoside triphosphates as substrates. The chain is DNA-directed RNA polymerase subunit beta from Enterococcus faecium (Streptococcus faecium).